The following is a 292-amino-acid chain: AhcY transcriptional activator HvrB (292 aa).

The HTH lysR-type domain occupies 10-67 (PPLTALRAFAATASEGGFSAAARKLNVTHAAIAQQVRALEADLDVPLVWRDGKHLHLT). Positions 27-46 (FSAAARKLNVTHAAIAQQVR) form a DNA-binding region, H-T-H motif.

The protein belongs to the LysR transcriptional regulatory family.

In terms of biological role, functions as a low-light activator of ahcY expression (gene for S-adenosyl-L-homocysteine hydrolase) and as a high-light activator of an uncharacterized 21.6 kDa protein in the ahcY-hvrB intergenic region (orf5). It is also a negative regulator of its own expression. The protein is AhcY transcriptional activator HvrB (hvrB) of Rhodobacter capsulatus (strain ATCC BAA-309 / NBRC 16581 / SB1003).